The sequence spans 874 residues: Coatomer subunit gamma-1 (874 aa).

Basic and acidic residues predominate over residues 1–11; it reads MLKKFDKKDEE. A disordered region spans residues 1 to 21; that stretch reads MLKKFDKKDEESGGGSNPFQH. HEAT repeat units follow at residues 64–101, 283–320, 322–355, and 356–392; these read TEAT…IAED, KELA…KHPS, VTAC…GSEG, and SIDR…KYPR. Thr-594 is modified (phosphothreonine). The interval 609 to 874 is interaction with ZNF289/ARFGAP2; sequence RQEIFQEQLA…PVDIVLASVG (266 aa).

Belongs to the COPG family. As to quaternary structure, oligomeric complex that consists of at least the alpha, beta, beta', gamma, delta, epsilon and zeta subunits. Interacts with ZNF289/ARFGAP2 through its C-terminal appendage domain. Interacts with EGFR upon EGF treatment; interaction is essential for regulation of EGF-dependent nuclear transport of EGFR by retrograde trafficking from the Golgi to the ER. The coatomer interacts with KDEL receptors; the interaction is important for retrograde trafficking of KDEL-bearing proteins from the Golgi to the endoplasmic reticulum. Interacts with COPB1. Interacts with TMED10 (via C-terminus). Interacts with TMED2, TMED3, TMED7 and TMED9.

It localises to the cytoplasm. The protein resides in the cytosol. The protein localises to the golgi apparatus membrane. Its subcellular location is the cytoplasmic vesicle. It is found in the COPI-coated vesicle membrane. In terms of biological role, the coatomer is a cytosolic protein complex that binds to dilysine motifs and reversibly associates with Golgi non-clathrin-coated vesicles, which further mediate biosynthetic protein transport from the ER, via the Golgi up to the trans Golgi network. Coatomer complex is required for budding from Golgi membranes, and is essential for the retrograde Golgi-to-ER transport of dilysine-tagged proteins. In mammals, the coatomer can only be recruited by membranes associated to ADP-ribosylation factors (ARFs), which are small GTP-binding proteins; the complex also influences the Golgi structural integrity, as well as the processing, activity, and endocytic recycling of LDL receptors. Required for limiting lipid storage in lipid droplets. Involved in lipid homeostasis by regulating the presence of perilipin family members PLIN2 and PLIN3 at the lipid droplet surface and promoting the association of adipocyte triglyceride lipase (PNPLA2) with the lipid droplet surface to mediate lipolysis. In Bos taurus (Bovine), this protein is Coatomer subunit gamma-1 (COPG1).